Consider the following 166-residue polypeptide: Ubiquitin-conjugating enzyme E2 13 (166 aa).

In terms of domain architecture, UBC core spans 4-164; that stretch reads QACLLLQKQL…VSRCVRKSQE (161 aa). C89 (glycyl thioester intermediate) is an active-site residue.

This sequence belongs to the ubiquitin-conjugating enzyme family.

It catalyses the reaction S-ubiquitinyl-[E1 ubiquitin-activating enzyme]-L-cysteine + [E2 ubiquitin-conjugating enzyme]-L-cysteine = [E1 ubiquitin-activating enzyme]-L-cysteine + S-ubiquitinyl-[E2 ubiquitin-conjugating enzyme]-L-cysteine.. It functions in the pathway protein modification; protein ubiquitination. In terms of biological role, accepts the ubiquitin from the E1 complex and catalyzes its covalent attachment to other proteins. Involved in the formation of multiubiquitin chains. Signal the protein for selective degradation. The sequence is that of Ubiquitin-conjugating enzyme E2 13 (UBC13) from Arabidopsis thaliana (Mouse-ear cress).